A 55-amino-acid chain; its full sequence is Large ribosomal subunit protein bL33 (55 aa).

The protein belongs to the bacterial ribosomal protein bL33 family.

The polypeptide is Large ribosomal subunit protein bL33 (Rhodopseudomonas palustris (strain BisA53)).